A 458-amino-acid chain; its full sequence is Cysteine--tRNA ligase (458 aa).

Cys-29 lines the Zn(2+) pocket. Positions 31-41 (PTVYDNPHIGN) match the 'HIGH' region motif. Residues Cys-214, His-239, and Glu-243 each contribute to the Zn(2+) site. Residues 272 to 276 (KMSKS) carry the 'KMSKS' region motif. Lys-275 provides a ligand contact to ATP.

This sequence belongs to the class-I aminoacyl-tRNA synthetase family. In terms of assembly, monomer. The cofactor is Zn(2+).

Its subcellular location is the cytoplasm. The enzyme catalyses tRNA(Cys) + L-cysteine + ATP = L-cysteinyl-tRNA(Cys) + AMP + diphosphate. The sequence is that of Cysteine--tRNA ligase from Rickettsia bellii (strain OSU 85-389).